Here is a 366-residue protein sequence, read N- to C-terminus: Carbamoyl phosphate synthase small chain (366 aa).

The CPSase stretch occupies residues 1-174 (MQEIPAILVL…GERYTVDNPD (174 aa)). 3 residues coordinate L-glutamine: S48, G226, and G228. The Glutamine amidotransferase type-1 domain occupies 178-366 (HVVAFDYGIK…FTELMERLKN (189 aa)). C256 serves as the catalytic Nucleophile. Positions 257, 260, 298, 300, and 301 each coordinate L-glutamine. Active-site residues include H340 and E342.

Belongs to the CarA family. In terms of assembly, composed of two chains; the small (or glutamine) chain promotes the hydrolysis of glutamine to ammonia, which is used by the large (or ammonia) chain to synthesize carbamoyl phosphate. Tetramer of heterodimers (alpha,beta)4.

It carries out the reaction hydrogencarbonate + L-glutamine + 2 ATP + H2O = carbamoyl phosphate + L-glutamate + 2 ADP + phosphate + 2 H(+). The catalysed reaction is L-glutamine + H2O = L-glutamate + NH4(+). The protein operates within amino-acid biosynthesis; L-arginine biosynthesis; carbamoyl phosphate from bicarbonate: step 1/1. Its pathway is pyrimidine metabolism; UMP biosynthesis via de novo pathway; (S)-dihydroorotate from bicarbonate: step 1/3. Functionally, small subunit of the glutamine-dependent carbamoyl phosphate synthetase (CPSase). CPSase catalyzes the formation of carbamoyl phosphate from the ammonia moiety of glutamine, carbonate, and phosphate donated by ATP, constituting the first step of 2 biosynthetic pathways, one leading to arginine and/or urea and the other to pyrimidine nucleotides. The small subunit (glutamine amidotransferase) binds and cleaves glutamine to supply the large subunit with the substrate ammonia. The polypeptide is Carbamoyl phosphate synthase small chain (Chlorobaculum tepidum (strain ATCC 49652 / DSM 12025 / NBRC 103806 / TLS) (Chlorobium tepidum)).